The chain runs to 63 residues: Large ribosomal subunit protein bL28 (63 aa).

Belongs to the bacterial ribosomal protein bL28 family.

The protein is Large ribosomal subunit protein bL28 of Thermomicrobium roseum (strain ATCC 27502 / DSM 5159 / P-2).